A 288-amino-acid polypeptide reads, in one-letter code: Polyamine aminopropyltransferase (288 aa).

One can recognise a PABS domain in the interval 9–238; the sequence is ETLHDQFGQY…GIMTFAWATD (230 aa). S-methyl-5'-thioadenosine is bound at residue Gln-33. His-64 and Asp-88 together coordinate spermidine. S-methyl-5'-thioadenosine contacts are provided by residues Glu-108 and 140-141; that span reads DG. Asp-158 (proton acceptor) is an active-site residue. 158–161 serves as a coordination point for spermidine; sequence DCTD. Pro-165 is a binding site for S-methyl-5'-thioadenosine.

Belongs to the spermidine/spermine synthase family. As to quaternary structure, homodimer or homotetramer.

It is found in the cytoplasm. It catalyses the reaction S-adenosyl 3-(methylsulfanyl)propylamine + putrescine = S-methyl-5'-thioadenosine + spermidine + H(+). Its pathway is amine and polyamine biosynthesis; spermidine biosynthesis; spermidine from putrescine: step 1/1. In terms of biological role, catalyzes the irreversible transfer of a propylamine group from the amino donor S-adenosylmethioninamine (decarboxy-AdoMet) to putrescine (1,4-diaminobutane) to yield spermidine. The protein is Polyamine aminopropyltransferase of Escherichia coli (strain ATCC 8739 / DSM 1576 / NBRC 3972 / NCIMB 8545 / WDCM 00012 / Crooks).